Reading from the N-terminus, the 194-residue chain is MTRPLALIIFLVAILTNTDPSRSDAGSDPVNYLFRGPVTAVAAIAGEGEHAGIKGSLTFLQKSLDGRTVINGTISGLPEGKHGLHIVDSGDMTKGCYITTAKGHLNPFNLSHGAPSDSARHVGDLGNIYADDTGISVINLTDTVISLFPTPAFVIGRILVIHTTYDDLGRGGSPVSKVNGNAGGRLACGIISYV.

Residues 1–20 (MTRPLALIIFLVAILTNTDP) form the signal peptide. His-85 and His-104 together coordinate Cu cation. A disulfide bridge connects residues Cys-96 and Cys-188. Residues His-104, His-112, His-121, and Asp-124 each coordinate Zn(2+). His-162 provides a ligand contact to Cu cation.

It belongs to the Cu-Zn superoxide dismutase family. As to quaternary structure, homodimer. Requires Cu cation as cofactor. The cofactor is Zn(2+).

The catalysed reaction is 2 superoxide + 2 H(+) = H2O2 + O2. Destroys radicals which are normally produced within the cells and which are toxic to biological systems. In Ramazzottius varieornatus (Water bear), this protein is Superoxide dismutase [Cu-Zn].